The chain runs to 155 residues: Small ribosomal subunit protein uS7c (155 aa).

This sequence belongs to the universal ribosomal protein uS7 family. In terms of assembly, part of the 30S ribosomal subunit.

Its subcellular location is the plastid. The protein resides in the chloroplast. Functionally, one of the primary rRNA binding proteins, it binds directly to 16S rRNA where it nucleates assembly of the head domain of the 30S subunit. The protein is Small ribosomal subunit protein uS7c (rps7) of Cedrus deodara (Deodar cedar).